The following is a 650-amino-acid chain: Pentatricopeptide repeat-containing protein At1g51965, mitochondrial (650 aa).

The transit peptide at M1–Y23 directs the protein to the mitochondrion. PPR repeat units follow at residues D132–G169, N170–K200, N202–L236, D237–R267, D269–L303, N304–P338, N339–Y369, T371–G405, E406–T440, D441–P475, D476–P510, D511–P545, D546–P580, and N581–P615.

This sequence belongs to the PPR family. P subfamily.

It is found in the mitochondrion. In Arabidopsis thaliana (Mouse-ear cress), this protein is Pentatricopeptide repeat-containing protein At1g51965, mitochondrial.